Here is a 129-residue protein sequence, read N- to C-terminus: Histone H2A type 2-C (129 aa).

A disordered region spans residues 1 to 22; the sequence is MSGRGKQGGKARAKAKSRSSRA. N-acetylserine is present on Ser-2. The residue at position 2 (Ser-2) is a Phosphoserine; by RPS6KA5. Citrulline; alternate is present on Arg-4. A Symmetric dimethylarginine; by PRMT5; alternate modification is found at Arg-4. N6-(2-hydroxyisobutyryl)lysine; alternate is present on residues Lys-6 and Lys-10. The residue at position 6 (Lys-6) is an N6-acetyllysine; alternate. The span at 7–19 shows a compositional bias: basic residues; that stretch reads QGGKARAKAKSRS. Lys-10 bears the N6-lactoyllysine; alternate mark. The residue at position 10 (Lys-10) is an N6-succinyllysine; alternate. Residues Lys-14 and Lys-16 each participate in a glycyl lysine isopeptide (Lys-Gly) (interchain with G-Cter in ubiquitin) cross-link. Residue Lys-37 is modified to N6-(2-hydroxyisobutyryl)lysine; alternate. Lys-37 carries the post-translational modification N6-(beta-hydroxybutyryl)lysine; alternate. At Lys-37 the chain carries N6-crotonyllysine; alternate. An N6-(2-hydroxyisobutyryl)lysine mark is found at Lys-75 and Lys-76. Lys-96 is subject to N6-(2-hydroxyisobutyryl)lysine; alternate. Lys-96 carries the post-translational modification N6-succinyllysine; alternate. Lys-96 bears the N6-glutaryllysine; alternate mark. The residue at position 100 (Lys-100) is an N6-glutaryllysine. Position 105 is an N5-methylglutamine (Gln-105). The residue at position 119 (Lys-119) is an N6-(2-hydroxyisobutyryl)lysine; alternate. N6-crotonyllysine; alternate is present on residues Lys-119 and Lys-120. 2 positions are modified to N6-glutaryllysine; alternate: Lys-119 and Lys-120. A Glycyl lysine isopeptide (Lys-Gly) (interchain with G-Cter in ubiquitin); alternate cross-link involves residue Lys-120. Thr-121 carries the post-translational modification Phosphothreonine; by DCAF1. Phosphoserine is present on Ser-123. N6-crotonyllysine is present on Lys-125.

This sequence belongs to the histone H2A family. The nucleosome is a histone octamer containing two molecules each of H2A, H2B, H3 and H4 assembled in one H3-H4 heterotetramer and two H2A-H2B heterodimers. The octamer wraps approximately 147 bp of DNA. Post-translationally, deiminated on Arg-4 in granulocytes upon calcium entry. In terms of processing, monoubiquitination of Lys-120 (H2AK119Ub) by RING1, TRIM37 and RNF2/RING2 complex gives a specific tag for epigenetic transcriptional repression and participates in X chromosome inactivation of female mammals. It is involved in the initiation of both imprinted and random X inactivation. Ubiquitinated H2A is enriched in inactive X chromosome chromatin. Ubiquitination of H2A functions downstream of methylation of 'Lys-27' of histone H3 (H3K27me). H2AK119Ub by RNF2/RING2 can also be induced by ultraviolet and may be involved in DNA repair. Following DNA double-strand breaks (DSBs), it is ubiquitinated through 'Lys-63' linkage of ubiquitin moieties by the E2 ligase UBE2N and the E3 ligases RNF8 and RNF168, leading to the recruitment of repair proteins to sites of DNA damage. Ubiquitination at Lys-14 and Lys-16 (H2AK13Ub and H2AK15Ub, respectively) in response to DNA damage is initiated by RNF168 that mediates monoubiquitination at these 2 sites, and 'Lys-63'-linked ubiquitin are then conjugated to monoubiquitin; RNF8 is able to extend 'Lys-63'-linked ubiquitin chains in vitro. H2AK119Ub and ionizing radiation-induced 'Lys-63'-linked ubiquitination (H2AK13Ub and H2AK15Ub) are distinct events. Phosphorylation on Ser-2 (H2AS1ph) is enhanced during mitosis. Phosphorylation on Ser-2 by RPS6KA5/MSK1 directly represses transcription. Acetylation of H3 inhibits Ser-2 phosphorylation by RPS6KA5/MSK1. Phosphorylation at Thr-121 (H2AT120ph) by DCAF1 is present in the regulatory region of many tumor suppresor genes and down-regulates their transcription. Post-translationally, symmetric dimethylation on Arg-4 by the PRDM1/PRMT5 complex may play a crucial role in the germ-cell lineage. In terms of processing, glutamine methylation at Gln-105 (H2AQ104me) by FBL is specifically dedicated to polymerase I. It is present at 35S ribosomal DNA locus and impairs binding of the FACT complex. Crotonylation (Kcr) is specifically present in male germ cells and marks testis-specific genes in post-meiotic cells, including X-linked genes that escape sex chromosome inactivation in haploid cells. Crotonylation marks active promoters and enhancers and confers resistance to transcriptional repressors. It is also associated with post-meiotically activated genes on autosomes. Post-translationally, lactylated in macrophages by EP300/P300 by using lactoyl-CoA directly derived from endogenous or exogenous lactate, leading to stimulates gene transcription.

Its subcellular location is the nucleus. It localises to the chromosome. Core component of nucleosome. Nucleosomes wrap and compact DNA into chromatin, limiting DNA accessibility to the cellular machineries which require DNA as a template. Histones thereby play a central role in transcription regulation, DNA repair, DNA replication and chromosomal stability. DNA accessibility is regulated via a complex set of post-translational modifications of histones, also called histone code, and nucleosome remodeling. This chain is Histone H2A type 2-C, found in Bos taurus (Bovine).